Here is a 420-residue protein sequence, read N- to C-terminus: Tyrosine--tRNA ligase (420 aa).

Tyrosine 33 contributes to the L-tyrosine binding site. The 'HIGH' region signature appears at 38–47; sequence PTADSLHVGH. L-tyrosine contacts are provided by tyrosine 167 and glutamine 171. A 'KMSKS' region motif is present at residues 227-231; sequence KFGKT. Lysine 230 is a binding site for ATP. Positions 353-419 constitute an S4 RNA-binding domain; the sequence is LTVADLLVKV…GKRNYALVKV (67 aa).

It belongs to the class-I aminoacyl-tRNA synthetase family. TyrS type 1 subfamily. Homodimer.

Its subcellular location is the cytoplasm. The catalysed reaction is tRNA(Tyr) + L-tyrosine + ATP = L-tyrosyl-tRNA(Tyr) + AMP + diphosphate + H(+). Its function is as follows. Catalyzes the attachment of tyrosine to tRNA(Tyr) in a two-step reaction: tyrosine is first activated by ATP to form Tyr-AMP and then transferred to the acceptor end of tRNA(Tyr). In Anaeromyxobacter dehalogenans (strain 2CP-C), this protein is Tyrosine--tRNA ligase.